The primary structure comprises 420 residues: Ribosome biogenesis protein WDR12 homolog (420 aa).

The segment at 10–92 (VQVHLKTKQE…EDAIEIEYVE (83 aa)) is ubiquitin-like (UBL) domain. WD repeat units follow at residues 104–142 (LHDD…LTIS), 143–185 (GHTA…NAVD), 192–231 (GHER…GVEG), 250–288 (GHRE…IKTE), 290–329 (STNK…GSVV), 335–375 (GHNA…APLY), and 379–417 (GHGD…AEDT).

This sequence belongs to the WD repeat WDR12/YTM1 family.

Its subcellular location is the nucleus. It is found in the nucleolus. The protein resides in the nucleoplasm. Functionally, required for maturation of ribosomal RNAs and formation of the large ribosomal subunit. The polypeptide is Ribosome biogenesis protein WDR12 homolog (Drosophila sechellia (Fruit fly)).